The chain runs to 157 residues: Endoribonuclease YbeY (157 aa).

Zn(2+) contacts are provided by His-114, His-118, and His-124.

Belongs to the endoribonuclease YbeY family. Zn(2+) serves as cofactor.

The protein localises to the cytoplasm. In terms of biological role, single strand-specific metallo-endoribonuclease involved in late-stage 70S ribosome quality control and in maturation of the 3' terminus of the 16S rRNA. The sequence is that of Endoribonuclease YbeY from Salmonella typhimurium (strain LT2 / SGSC1412 / ATCC 700720).